A 114-amino-acid chain; its full sequence is Class I hydrophobin SC16 (114 aa).

Positions 1–17 (MRFFATLVLALPALAMA) are cleaved as a signal peptide. 4 disulfide bridges follow: Cys-33-Cys-93, Cys-40-Cys-87, Cys-41-Cys-74, and Cys-94-Cys-107. Asn-42 carries an N-linked (GlcNAc...) asparagine glycan.

It belongs to the fungal hydrophobin family. Self-assembles to form functional amyloid fibrils called rodlets. Self-assembly into fibrillar rodlets occurs spontaneously at hydrophobic:hydrophilic interfaces and the rodlets further associate laterally to form amphipathic monolayers.

The protein localises to the secreted. It localises to the cell wall. Functionally, aerial growth, conidiation, and dispersal of filamentous fungi in the environment rely upon a capability of their secreting small amphipathic proteins called hydrophobins (HPBs) with low sequence identity. Class I can self-assemble into an outermost layer of rodlet bundles on aerial cell surfaces, conferring cellular hydrophobicity that supports fungal growth, development and dispersal; whereas Class II form highly ordered films at water-air interfaces through intermolecular interactions but contribute nothing to the rodlet structure. The chain is Class I hydrophobin SC16 from Schizophyllum commune (strain H4-8 / FGSC 9210) (Split gill fungus).